A 362-amino-acid polypeptide reads, in one-letter code: Atypical chemokine receptor 3 (362 aa).

Residues 1 to 47 (MDVHLFDYAEPGNYSDINWPCNSSDCIVVDTVQCPTMPNKNVLLYTL) lie on the Extracellular side of the membrane. 2 N-linked (GlcNAc...) asparagine glycosylation sites follow: Asn-13 and Asn-22. Residues 48 to 68 (SFIYIFIFVIGMIANSVVVWV) form a helical membrane-spanning segment. The Cytoplasmic portion of the chain corresponds to 69 to 81 (NIQAKTTGYDTHC). The helical transmembrane segment at 82–102 (YILNLAIADLWVVITIPVWVV) threads the bilayer. Over 103–118 (SLVQHNQWPMGELTCK) the chain is Extracellular. Cys-117 and Cys-196 are oxidised to a cystine. Residues 119 to 139 (ITHLIFSINLFGSIFFLACMS) form a helical membrane-spanning segment. The Cytoplasmic portion of the chain corresponds to 140–162 (VDRYLSITYFTGTSSYKKKMVRR). The chain crosses the membrane as a helical span at residues 163–183 (VVCILVWLLAFFVSLPDTYYL). Over 184–213 (KTVTSASNNETYCRSFYPEHSIKEWLIGME) the chain is Extracellular. Residues 214-234 (LVSVILGFAVPFTIIAIFYFL) form a helical membrane-spanning segment. Over 235–252 (LARAMSASGDQEKHSSRK) the chain is Cytoplasmic. Residues 253–273 (IIFSYVVVFLVCWLPYHFVVL) form a helical membrane-spanning segment. Over 274-296 (LDIFSILHYIPFTCQLENVLFTA) the chain is Extracellular. The helical transmembrane segment at 297–319 (LHVTQCLSLVHCCVNPVLYSFIN) threads the bilayer. Residues 320–362 (RNYRYELMKAFIFKYSAKTGLTKLIDASRVSETEYSALEQNTK) lie on the Cytoplasmic side of the membrane. A C-terminal cytoplasmic tail region spans residues 324–362 (YELMKAFIFKYSAKTGLTKLIDASRVSETEYSALEQNTK). Phosphoserine occurs at positions 347, 350, and 355.

The protein belongs to the G-protein coupled receptor 1 family. Atypical chemokine receptor subfamily. As to quaternary structure, homodimer. Can form heterodimers with CXCR4; heterodimerization may regulate CXCR4 signaling activity. Interacts with ARRB1 and ARRB2. Post-translationally, the Ser/Thr residues in the C-terminal cytoplasmic tail may be phosphorylated. In terms of processing, ubiquitinated at the Lys residues in its C-terminal cytoplasmic tail and is essential for correct trafficking from and to the cell membrane. Deubiquitinated by CXCL12-stimulation in a reversible manner. Not detected in blood, liver, lung and heart, but high expression detected in several tumor cell lines (at protein level). Expressed in heart, spleen, kidney, lung, ovary, brain, testis, astrocytes, neutrophils and B-lymphocytes.

It localises to the cell membrane. Its subcellular location is the early endosome. It is found in the recycling endosome. Functionally, atypical chemokine receptor that controls chemokine levels and localization via high-affinity chemokine binding that is uncoupled from classic ligand-driven signal transduction cascades, resulting instead in chemokine sequestration, degradation, or transcytosis. Also known as interceptor (internalizing receptor) or chemokine-scavenging receptor or chemokine decoy receptor. Acts as a receptor for chemokines CXCL11 and CXCL12/SDF1. Chemokine binding does not activate G-protein-mediated signal transduction but instead induces beta-arrestin recruitment, leading to ligand internalization and activation of MAPK signaling pathway. Required for regulation of CXCR4 protein levels in migrating interneurons, thereby adapting their chemokine responsiveness. In glioma cells, transduces signals via MEK/ERK pathway, mediating resistance to apoptosis. Promotes cell growth and survival. Not involved in cell migration, adhesion or proliferation of normal hematopoietic progenitors but activated by CXCL11 in malignant hemapoietic cells, leading to phosphorylation of ERK1/2 (MAPK3/MAPK1) and enhanced cell adhesion and migration. Plays a regulatory role in CXCR4-mediated activation of cell surface integrins by CXCL12. Required for heart valve development. Regulates axon guidance in the oculomotor system through the regulation of CXCL12 levels. The sequence is that of Atypical chemokine receptor 3 from Mus musculus (Mouse).